A 270-amino-acid chain; its full sequence is uncharacterized protein (270 aa).

Ala30–Asn55 is an NADP(+) binding site. Position 157 (Ser157) interacts with substrate. Residue Tyr171 is the Proton acceptor of the active site.

The protein belongs to the short-chain dehydrogenases/reductases (SDR) family.

This is an uncharacterized protein from Mycobacterium tuberculosis (strain CDC 1551 / Oshkosh).